A 115-amino-acid chain; its full sequence is Gonadotropin subunit beta-2 (115 aa).

6 disulfides stabilise this stretch: Cys-6-Cys-54, Cys-20-Cys-69, Cys-23-Cys-107, Cys-31-Cys-85, Cys-35-Cys-87, and Cys-90-Cys-97. An N-linked (GlcNAc...) asparagine glycan is attached at Asn-10.

This sequence belongs to the glycoprotein hormones subunit beta family. In terms of assembly, heterodimer of an alpha and a beta chain.

It localises to the secreted. Functionally, involved in gametogenesis and steroidogenesis. This Thunnus obesus (Bigeye tuna) protein is Gonadotropin subunit beta-2 (cgbb).